We begin with the raw amino-acid sequence, 928 residues long: Outer membrane protein SlpA (928 aa).

A signal peptide spans 1–23 (MKKRLVTLLAGLLTVLSMGFGLA). One can recognise an SLH domain in the interval 24–84 (QFSDVPAGHW…QQIEEELKTQ (61 aa)).

In terms of assembly, homotrimer.

It localises to the cell outer membrane. In terms of biological role, plays an important role in the structural organization and integrity of the cell envelope, bridging the outer membrane to the peptidoglyan layer. Appears to be a nonselective channel. This chain is Outer membrane protein SlpA (slpA), found in Thermus thermophilus (strain ATCC 27634 / DSM 579 / HB8).